Consider the following 863-residue polypeptide: Leucine--tRNA ligase (863 aa).

The 'HIGH' region signature appears at 42–52 (PYPSGKLHMGH). The 'KMSKS' region signature appears at 623-627 (KMSKS). Lys-626 contacts ATP.

This sequence belongs to the class-I aminoacyl-tRNA synthetase family.

Its subcellular location is the cytoplasm. It catalyses the reaction tRNA(Leu) + L-leucine + ATP = L-leucyl-tRNA(Leu) + AMP + diphosphate. This chain is Leucine--tRNA ligase, found in Paraburkholderia xenovorans (strain LB400).